We begin with the raw amino-acid sequence, 448 residues long: Tubulin alpha-5 chain (448 aa).

An MREC motif motif is present at residues 1–4; that stretch reads MREC. Position 11 (glutamine 11) interacts with GTP. Position 40 is an N6-acetyllysine (lysine 40). Glutamate 71, serine 140, glycine 144, threonine 145, threonine 179, asparagine 206, and asparagine 228 together coordinate GTP. Mg(2+) is bound at residue glutamate 71. The active site involves glutamate 254.

This sequence belongs to the tubulin family. Dimer of alpha and beta chains. A typical microtubule is a hollow water-filled tube with an outer diameter of 25 nm and an inner diameter of 15 nM. Alpha-beta heterodimers associate head-to-tail to form protofilaments running lengthwise along the microtubule wall with the beta-tubulin subunit facing the microtubule plus end conferring a structural polarity. Microtubules usually have 13 protofilaments but different protofilament numbers can be found in some organisms and specialized cells. Requires Mg(2+) as cofactor. Post-translationally, some glutamate residues at the C-terminus are polyglycylated, resulting in polyglycine chains on the gamma-carboxyl group. Glycylation is mainly limited to tubulin incorporated into axonemes (cilia and flagella) whereas glutamylation is prevalent in neuronal cells, centrioles, axonemes, and the mitotic spindle. Both modifications can coexist on the same protein on adjacent residues, and lowering polyglycylation levels increases polyglutamylation, and reciprocally. The precise function of polyglycylation is still unclear. Some glutamate residues at the C-terminus are polyglutamylated, resulting in polyglutamate chains on the gamma-carboxyl group. Polyglutamylation plays a key role in microtubule severing by spastin (SPAST). SPAST preferentially recognizes and acts on microtubules decorated with short polyglutamate tails: severing activity by SPAST increases as the number of glutamates per tubulin rises from one to eight, but decreases beyond this glutamylation threshold. In terms of processing, acetylation of alpha chains at Lys-40 is located inside the microtubule lumen. This modification has been correlated with increased microtubule stability, intracellular transport and ciliary assembly.

It localises to the cytoplasm. Its subcellular location is the cytoskeleton. The enzyme catalyses GTP + H2O = GDP + phosphate + H(+). Its function is as follows. Tubulin is the major constituent of microtubules, a cylinder consisting of laterally associated linear protofilaments composed of alpha- and beta-tubulin heterodimers. Microtubules grow by the addition of GTP-tubulin dimers to the microtubule end, where a stabilizing cap forms. Below the cap, tubulin dimers are in GDP-bound state, owing to GTPase activity of alpha-tubulin. This Gallus gallus (Chicken) protein is Tubulin alpha-5 chain.